A 158-amino-acid chain; its full sequence is MTTVIYPGTFDPITNGHMDIIQRSAVLFSKVIVAVAKNPSKQPLFNLAERVELVQLSVVHLGNVEVIGFDDLLANVVKARQIDAIIRGVRTTMDFEYESQLAHLNRLLTNGVESLFLPPTEQWSYVSSTIVRDIFLHQGDVSRLVPAAVLRALEKRAK.

Threonine 9 lines the substrate pocket. Residues 9 to 10 (TF) and histidine 17 contribute to the ATP site. Residues lysine 41, leucine 73, and arginine 87 each coordinate substrate. Residues 88 to 90 (GVR), glutamate 98, and 123 to 129 (WSYVSST) each bind ATP.

The protein belongs to the bacterial CoaD family. In terms of assembly, homohexamer. Mg(2+) is required as a cofactor.

It localises to the cytoplasm. It carries out the reaction (R)-4'-phosphopantetheine + ATP + H(+) = 3'-dephospho-CoA + diphosphate. Its pathway is cofactor biosynthesis; coenzyme A biosynthesis; CoA from (R)-pantothenate: step 4/5. Functionally, reversibly transfers an adenylyl group from ATP to 4'-phosphopantetheine, yielding dephospho-CoA (dPCoA) and pyrophosphate. The sequence is that of Phosphopantetheine adenylyltransferase from Histophilus somni (strain 129Pt) (Haemophilus somnus).